The chain runs to 466 residues: Probable Xaa-Pro aminopeptidase pepP (466 aa).

Mn(2+) contacts are provided by D264, D275, E398, and E438.

This sequence belongs to the peptidase M24B family. Mn(2+) is required as a cofactor.

It catalyses the reaction Release of any N-terminal amino acid, including proline, that is linked to proline, even from a dipeptide or tripeptide.. In terms of biological role, catalyzes the removal of a penultimate prolyl residue from the N-termini of peptides. The protein is Probable Xaa-Pro aminopeptidase pepP (pepP) of Aspergillus terreus (strain NIH 2624 / FGSC A1156).